A 378-amino-acid polypeptide reads, in one-letter code: Peptide methionine sulfoxide reductase MsrA/MsrB (378 aa).

The peptide methionine sulfoxide reductase A stretch occupies residues Q40–A197. C48 is an active-site residue. A MsrB domain is found at D240–K362. Residue C351 is the Nucleophile of the active site.

It in the N-terminal section; belongs to the MsrA Met sulfoxide reductase family. In the C-terminal section; belongs to the MsrB Met sulfoxide reductase family.

The catalysed reaction is L-methionyl-[protein] + [thioredoxin]-disulfide + H2O = L-methionyl-(S)-S-oxide-[protein] + [thioredoxin]-dithiol. It catalyses the reaction [thioredoxin]-disulfide + L-methionine + H2O = L-methionine (S)-S-oxide + [thioredoxin]-dithiol. The enzyme catalyses L-methionyl-[protein] + [thioredoxin]-disulfide + H2O = L-methionyl-(R)-S-oxide-[protein] + [thioredoxin]-dithiol. In terms of biological role, has an important function as a repair enzyme for proteins that have been inactivated by oxidation. Catalyzes the reversible oxidation-reduction of methionine sulfoxide in proteins to methionine. This Vibrio cholerae serotype O1 (strain ATCC 39315 / El Tor Inaba N16961) protein is Peptide methionine sulfoxide reductase MsrA/MsrB (msrAB).